The following is a 248-amino-acid chain: Ras-like protein family member 11B (248 aa).

The small GTPase-like stretch occupies residues 29 to 246; that stretch reads AGRRLVKIAV…ALSAKVRTVT (218 aa). Residues 40–47, 87–91, and 152–155 contribute to the GTP site; these read GASGVGKT, DTPGI, and NKAD. Positions 205–229 are disordered; sequence QQPSGTPEKRRTSLIPRPKSPNMQD.

This sequence belongs to the small GTPase superfamily. Ras family.

It carries out the reaction GTP + H2O = GDP + phosphate + H(+). This Bos taurus (Bovine) protein is Ras-like protein family member 11B.